The following is a 194-amino-acid chain: Ancillary SecYEG translocon subunit (194 aa).

Residues 1 to 10 (MHLNKMKKVS) lie on the Cytoplasmic side of the membrane. The helical transmembrane segment at 11–31 (LKTYLVLFFLIFFIFCSFWFI) threads the bilayer. Topologically, residues 32–194 (KPKEKKLKLE…INMKINEIKR (163 aa)) are periplasmic.

Belongs to the YfgM family. Interacts with the SecYEG translocon. Forms a complex with PpiD.

The protein localises to the cell inner membrane. In terms of biological role, may mediate protein transfer from the SecYEG translocon to the periplasmic chaperone network via its periplasmic C-terminal region. This is Ancillary SecYEG translocon subunit from Buchnera aphidicola subsp. Schizaphis graminum (strain Sg).